Reading from the N-terminus, the 419-residue chain is Tryptophan synthase beta chain (419 aa).

Lysine 98 carries the post-translational modification N6-(pyridoxal phosphate)lysine.

It belongs to the TrpB family. As to quaternary structure, tetramer of two alpha and two beta chains. The cofactor is pyridoxal 5'-phosphate.

The enzyme catalyses (1S,2R)-1-C-(indol-3-yl)glycerol 3-phosphate + L-serine = D-glyceraldehyde 3-phosphate + L-tryptophan + H2O. The protein operates within amino-acid biosynthesis; L-tryptophan biosynthesis; L-tryptophan from chorismate: step 5/5. Its function is as follows. The beta subunit is responsible for the synthesis of L-tryptophan from indole and L-serine. The chain is Tryptophan synthase beta chain from Ruegeria sp. (strain TM1040) (Silicibacter sp.).